The sequence spans 922 residues: Lysine-specific demethylase 4 (922 aa).

Residues 1-15 show a composition bias toward polar residues; sequence MASAATTTHFPSSRI. Disordered regions lie at residues 1–21 and 42–61; these read MASA…EPCA and SSSC…MFTD. In terms of domain architecture, JmjN spans 87–130; the sequence is VLTFYPTMREFKNFSQYIKKIEQNGGHLKAGIAKIVAPEGWTPR. Y213 contacts 2-oxoglutarate. Residues 223-388 enclose the JmjC domain; that stretch reads DAQVEEWNMN…YGKDAVLCDC (166 aa). Residues H265 and E267 each coordinate Fe cation. Positions 275 and 283 each coordinate 2-oxoglutarate. Residues C314 and H320 each contribute to the Zn(2+) site. K321 provides a ligand contact to 2-oxoglutarate. Residue H356 participates in Fe cation binding. Zn(2+) is bound by residues C386 and C388. The disordered stretch occupies residues 435 to 475; it reads KRRQSLADASKIAKRARLGASSTATDSDGSSGSSGSEEATE. Positions 453–475 are enriched in low complexity; it reads GASSTATDSDGSSGSSGSEEATE. The C2HC pre-PHD-type zinc finger occupies 639–675; the sequence is TTSCQLCELRGGALIPCQIGTDSTWAHVACALFNRRA. A PHD-type; degenerate zinc finger spans residues 723–783; sequence WECVVCHRTD…GVVMICHKHE (61 aa).

This sequence belongs to the JHDM3 histone demethylase family. Fe(2+) serves as cofactor.

The protein resides in the nucleus. It catalyses the reaction N(6),N(6),N(6)-trimethyl-L-lysyl(9)-[histone H3] + 2 2-oxoglutarate + 2 O2 = N(6)-methyl-L-lysyl(9)-[histone H3] + 2 formaldehyde + 2 succinate + 2 CO2. The catalysed reaction is N(6),N(6),N(6)-trimethyl-L-lysyl(36)-[histone H3] + 2 2-oxoglutarate + 2 O2 = N(6)-methyl-L-lysyl(36)-[histone H3] + 2 formaldehyde + 2 succinate + 2 CO2. In terms of biological role, histone demethylase that specifically demethylates 'Lys-9' and 'Lys-36' residues of histone H3, thereby playing a central role in histone code. Demethylation of Lys residue generates formaldehyde and succinate. Involved in the negative regulation of lifespan in a germline-dependent fashion. The polypeptide is Lysine-specific demethylase 4 (jmjd-2) (Caenorhabditis elegans).